The following is a 288-amino-acid chain: Cyclin-dependent kinase 2 homolog (288 aa).

The region spanning 4-284 (YHGLEKIGEG…AKQALEHAYF (281 aa)) is the Protein kinase domain. Residues 10 to 18 (IGEGTYGVV) and Lys32 each bind ATP. Residue Thr14 is modified to Phosphothreonine. Tyr15 carries the post-translational modification Phosphotyrosine. Catalysis depends on Asp125, which acts as the Proton acceptor. Thr158 carries the phosphothreonine modification.

The protein belongs to the protein kinase superfamily. CMGC Ser/Thr protein kinase family. CDC2/CDKX subfamily. As to quaternary structure, may form a complex composed of at least the catalytic subunit CRK2 and a cyclin. Requires Mg(2+) as cofactor.

The protein localises to the cytoplasm. The catalysed reaction is L-seryl-[protein] + ATP = O-phospho-L-seryl-[protein] + ADP + H(+). It carries out the reaction L-threonyl-[protein] + ATP = O-phospho-L-threonyl-[protein] + ADP + H(+). The enzyme catalyses [DNA-directed RNA polymerase] + ATP = phospho-[DNA-directed RNA polymerase] + ADP + H(+). With respect to regulation, phosphorylation at Thr-14 or Tyr-15 inactivates the enzyme, while phosphorylation at Thr-158 activates it. Serine/threonine-protein kinase. Involved in the control of the cell cycle. Required for entry into S-phase and mitosis. Probable component of the kinase complex that phosphorylates the repetitive C-terminus of RNA polymerase II. The polypeptide is Cyclin-dependent kinase 2 homolog (Plasmodium vivax).